We begin with the raw amino-acid sequence, 149 residues long: Succinate dehydrogenase assembly factor 2, mitochondrial (149 aa).

Belongs to the SDHAF2 family. In terms of assembly, interacts with the flavoprotein subunit within the SDH catalytic dimer.

It localises to the mitochondrion matrix. Functionally, plays an essential role in the assembly of succinate dehydrogenase (SDH), an enzyme complex (also referred to as respiratory complex II) that is a component of both the tricarboxylic acid (TCA) cycle and the mitochondrial electron transport chain, and which couples the oxidation of succinate to fumarate with the reduction of ubiquinone (coenzyme Q) to ubiquinol. Required for flavinylation (covalent attachment of FAD) of the flavoprotein subunit of the SDH catalytic dimer. The polypeptide is Succinate dehydrogenase assembly factor 2, mitochondrial (Scheffersomyces stipitis (strain ATCC 58785 / CBS 6054 / NBRC 10063 / NRRL Y-11545) (Yeast)).